Consider the following 40-residue polypeptide: Protamine-1 (40 aa).

The tract at residues 1–40 (MPPRRKRVSSAPRRRRRTYRRTTAHKHQDRPVHRRRRRRH) is disordered.

As to expression, testis.

It localises to the nucleus. The protein resides in the chromosome. In terms of biological role, protamines substitute for histones in the chromatin of sperm during the haploid phase of spermatogenesis. They compact sperm DNA into a highly condensed, stable and inactive complex. The polypeptide is Protamine-1 (PBP1) (Bufo japonicus (Japanese common toad)).